Consider the following 232-residue polypeptide: Eukaryotic translation initiation factor NCBP (232 aa).

The span at 1–11 (MEPAVERKVPE) shows a compositional bias: basic and acidic residues. The disordered stretch occupies residues 1–49 (MEPAVERKVPEQEEQLQPSHARAEDAPPAAVEEEDEAEAEESERRNREL). Residues 31–41 (VEEEDEAEAEE) show a composition bias toward acidic residues.

The protein belongs to the eukaryotic initiation factor 4E family. EIF4F is a multi-subunit complex, the composition of which varies with external and internal environmental conditions. It is composed of at least EIF4A, EIF4E and EIF4G. EIF4E is also known to interact with other partners. In higher plants two isoforms of EIF4F have been identified, named isoform EIF4F and isoform EIF(iso)4F. Isoform EIF4F has subunits p220 and p26, whereas isoform EIF(iso)4F has subunits p82 and p28.

Recognizes and binds the 7-methylguanosine-containing mRNA cap during an early step in the initiation of protein synthesis and facilitates ribosome binding by inducing the unwinding of the mRNAs secondary structures. This chain is Eukaryotic translation initiation factor NCBP (NCBP), found in Triticum aestivum (Wheat).